A 246-amino-acid chain; its full sequence is Protein YIPF4 (246 aa).

Residues Met-1–Pro-115 lie on the Cytoplasmic side of the membrane. Residues Asp-116 to Phe-136 traverse the membrane as a helical segment. Residues Arg-137–Ser-140 lie on the Lumenal side of the membrane. Residues Trp-141–Gly-161 form a helical membrane-spanning segment. The Cytoplasmic portion of the chain corresponds to Gly-162 to Gln-168. Residues Val-169–Val-189 form a helical membrane-spanning segment. The Lumenal portion of the chain corresponds to Val-190 to Ser-197. The chain crosses the membrane as a helical span at residues Thr-198–Gly-218. Residues Glu-219–Lys-225 lie on the Cytoplasmic side of the membrane. The helical transmembrane segment at Pro-226–Val-246 threads the bilayer.

Belongs to the YIP1 family. Interacts with YIPF3 and YIPF5.

The protein resides in the golgi apparatus. Its subcellular location is the cis-Golgi network membrane. Functionally, involved in the maintenance of the Golgi structure. In Mus musculus (Mouse), this protein is Protein YIPF4 (Yipf4).